Reading from the N-terminus, the 696-residue chain is Neurogenic protein big brain (696 aa).

Topologically, residues 1–71 are cytoplasmic; that stretch reads MADESLHTVP…LEFWRSIISE (71 aa). Phosphoserine is present on S46. Position 47 is a phosphothreonine (T47). Residues 72 to 93 form a helical membrane-spanning segment; sequence CLASFMYVFIVCGAAAGVGVGA. Residues 94 to 97 lie on the Extracellular side of the membrane; the sequence is SVSS. The chain crosses the membrane as a helical span at residues 98 to 118; that stretch reads VLLATALASGLAMATLTQCFL. Over 119–143 the chain is Cytoplasmic; sequence HISGAHINPAVTLALCVVRSISPIR. The NPA 1 motif lies at 126–128; it reads NPA. The chain crosses the membrane as a helical span at residues 144–167; sequence AAMYITAQCGGGIAGAALLYGVTV. Residues 168-189 lie on the Extracellular side of the membrane; the sequence is PGYQGNLQAAISHSAALAAWER. The chain crosses the membrane as a helical span at residues 190 to 208; sequence FGVEFILTFLVVLCYFVST. Residues 209-213 are Cytoplasmic-facing; it reads DPMKK. A helical membrane pass occupies residues 214-234; it reads FMGNSAASIGCAYSACCFVSM. The Extracellular portion of the chain corresponds to 235 to 256; the sequence is PYLNPARSLGPSFVLNKWDSHW. The NPA 2 motif lies at 238-240; sequence NPA. A helical transmembrane segment spans residues 257–273; that stretch reads VYWFGPLVGGMASGLVY. The residue at position 273 (Y273) is a Phosphotyrosine; by Src. Residues 274-696 lie on the Cytoplasmic side of the membrane; the sequence is EYIFNSRNRN…HYGMLPLRPN (423 aa). S300 carries the phosphoserine modification. Positions 314–345 are disordered; sequence NKYQQSQGTYPRGQSNGNGGGQAAGNGQHQAA. Position 367 is a phosphotyrosine; by Abl (Y367). The residue at position 384 (Y384) is a Phosphotyrosine; by Src. S394 carries the phosphoserine modification. 2 disordered regions span residues 436-634 and 650-696; these read MRTQ…KVSA and TSQG…LRPN. 2 stretches are compositionally biased toward low complexity: residues 439-451 and 462-472; these read QQQQ…QQQQ and QNQNVQNQMQQ. The residue at position 478 (Y478) is a Phosphotyrosine; by Src. Positions 487–532 are enriched in low complexity; the sequence is QQQPIQQQQQQQQQQQLQQQQPNMGVQQQQMQPPPQMMSDPQQQPQ. Residues 549–558 show a composition bias toward basic and acidic residues; sequence GNHKYDRRDP. S576 carries the phosphoserine modification. The span at 576–587 shows a compositional bias: low complexity; sequence SDDSSYGSYHGS. The segment covering 599-616 has biased composition (pro residues); it reads EPSPPPPPMLMYAPPPQP. Y610 carries the post-translational modification Phosphotyrosine; by Abl. Residues 659-686 are compositionally biased toward low complexity; that stretch reads QQQQQQQQQQQQQQQQQQQQMMMQQQQQ.

Belongs to the MIP/aquaporin (TC 1.A.8) family. Post-translationally, phosphorylated at its C-terminus. In terms of tissue distribution, detected in all tissues with neurogenic abilities, for example the neurogenic ectoderm.

The protein localises to the membrane. Functionally, essential for proper differentiation of ectoderm. Acts synergistically with neurogenic locus proteins Notch and Delta during the separation of neural and epidermal cell lineages in response to the lateral inhibition signal. Voltage-insensitive monovalent cation channel. Ion transport is blocked by the presence of divalent cations. This is Neurogenic protein big brain (bib) from Drosophila melanogaster (Fruit fly).